We begin with the raw amino-acid sequence, 688 residues long: ATP-dependent RNA helicase ded1 (688 aa).

Polar residues-rich tracts occupy residues 1–15 (MADQ…LSID) and 55–67 (GLNN…NNNY). The disordered stretch occupies residues 1-170 (MADQLSSGMG…TPDDPSKQHT (170 aa)). Residues 88–102 (GFEGQQGAGWGGPRP) are compositionally biased toward gly residues. A compositionally biased stretch (low complexity) spans 103 to 114 (QGGFNPNAYRGN). Over residues 115–129 (AGAGAGAGAGGGGGS) the composition is skewed to gly residues. The Q motif motif lies at 194 to 222 (LTFSNPPLDNHLISNIQLARYNVPTPVQK). The Helicase ATP-binding domain occupies 225–416 (IPIVMGGRDL…RDFLKDYIFL (192 aa)). 238–245 (AQTGSGKT) is an ATP binding site. The DEAD box signature appears at 360–363 (DEAD). A Helicase C-terminal domain is found at 427–587 (NITQKVEYVE…EVPAFLETIA (161 aa)). Positions 590 to 615 (SSFGGGRGGRGGGRGGGRGRTQTADY) are disordered. Gly residues predominate over residues 592–608 (FGGGRGGRGGGRGGGRG).

It belongs to the DEAD box helicase family. DDX3/DED1 subfamily.

It is found in the cytoplasm. It catalyses the reaction ATP + H2O = ADP + phosphate + H(+). In terms of biological role, ATP-binding RNA helicase involved in translation initiation. Remodels RNA in response to ADP and ATP concentrations by facilitating disruption, but also formation of RNA duplexes. The protein is ATP-dependent RNA helicase ded1 (drh-9) of Neurospora crassa (strain ATCC 24698 / 74-OR23-1A / CBS 708.71 / DSM 1257 / FGSC 987).